Consider the following 444-residue polypeptide: Exodeoxyribonuclease 7 large subunit (444 aa).

It belongs to the XseA family. In terms of assembly, heterooligomer composed of large and small subunits.

The protein resides in the cytoplasm. It catalyses the reaction Exonucleolytic cleavage in either 5'- to 3'- or 3'- to 5'-direction to yield nucleoside 5'-phosphates.. Its function is as follows. Bidirectionally degrades single-stranded DNA into large acid-insoluble oligonucleotides, which are then degraded further into small acid-soluble oligonucleotides. This chain is Exodeoxyribonuclease 7 large subunit, found in Aliivibrio salmonicida (strain LFI1238) (Vibrio salmonicida (strain LFI1238)).